The sequence spans 1526 residues: Probable autotransporter YpjA (1526 aa).

A signal peptide spans 1–29 (MNRTSPYYCRRSVLSLLISALIYAPPGMA). Positions 1173 to 1223 (NSNWNLTNDVKPNPDPIPNPKPDPKPDPKPDPNPKPDPTPDPTPTPVPEKR) are disordered. Positions 1194-1206 (PDPKPDPKPDPNP) are enriched in basic and acidic residues. Over residues 1207-1219 (KPDPTPDPTPTPV) the composition is skewed to pro residues. In terms of domain architecture, Autotransporter spans 1258–1526 (ASPHNNNVWG…NAVAGVNWSF (269 aa)).

Its subcellular location is the cell outer membrane. Upon overexpression shows increased adherence to polyvinyl chloride (PVC) plates, increased mature biofilm formation. This is Probable autotransporter YpjA (ypjA) from Escherichia coli (strain K12).